The chain runs to 463 residues: UDP-N-acetylmuramoylalanine--D-glutamate ligase (463 aa).

109–115 serves as a coordination point for ATP; it reads GTDGKST.

This sequence belongs to the MurCDEF family.

The protein localises to the cytoplasm. It catalyses the reaction UDP-N-acetyl-alpha-D-muramoyl-L-alanine + D-glutamate + ATP = UDP-N-acetyl-alpha-D-muramoyl-L-alanyl-D-glutamate + ADP + phosphate + H(+). The protein operates within cell wall biogenesis; peptidoglycan biosynthesis. Its function is as follows. Cell wall formation. Catalyzes the addition of glutamate to the nucleotide precursor UDP-N-acetylmuramoyl-L-alanine (UMA). This Leptospira interrogans serogroup Icterohaemorrhagiae serovar copenhageni (strain Fiocruz L1-130) protein is UDP-N-acetylmuramoylalanine--D-glutamate ligase.